Here is a 70-residue protein sequence, read N- to C-terminus: Large ribosomal subunit protein bL31 (70 aa).

Zn(2+) is bound by residues Cys16, Cys18, Cys37, and Cys40.

Belongs to the bacterial ribosomal protein bL31 family. Type A subfamily. As to quaternary structure, part of the 50S ribosomal subunit. It depends on Zn(2+) as a cofactor.

Binds the 23S rRNA. The protein is Large ribosomal subunit protein bL31 of Shewanella frigidimarina (strain NCIMB 400).